We begin with the raw amino-acid sequence, 474 residues long: Chromosomal replication initiator protein DnaA (474 aa).

The segment at 1–90 is domain I, interacts with DnaA modulators; the sequence is MSSSLWLQCL…RQVVVPSSQI (90 aa). Residues 91–137 form a domain II region; sequence IAPAAPAVTLAPRPLPATRILQDDAPSRSWEPAPSPVQPESKSGYRS. Positions 112 to 137 are disordered; that stretch reads QDDAPSRSWEPAPSPVQPESKSGYRS. The span at 128–137 shows a compositional bias: polar residues; it reads QPESKSGYRS. A domain III, AAA+ region region spans residues 138–354; the sequence is NVNPKHNFNN…GALNRVIANA (217 aa). Residues G182, G184, K185, and T186 each contribute to the ATP site. The interval 355-474 is domain IV, binds dsDNA; that stretch reads NFTGRAITID…YSNLIRTLST (120 aa).

It belongs to the DnaA family. As to quaternary structure, oligomerizes as a right-handed, spiral filament on DNA at oriC.

The protein localises to the cytoplasm. Its function is as follows. Plays an essential role in the initiation and regulation of chromosomal replication. ATP-DnaA binds to the origin of replication (oriC) to initiate formation of the DNA replication initiation complex once per cell cycle. Binds the DnaA box (a 9 base pair repeat at the origin) and separates the double-stranded (ds)DNA. Forms a right-handed helical filament on oriC DNA; dsDNA binds to the exterior of the filament while single-stranded (ss)DNA is stabiized in the filament's interior. The ATP-DnaA-oriC complex binds and stabilizes one strand of the AT-rich DNA unwinding element (DUE), permitting loading of DNA polymerase. After initiation quickly degrades to an ADP-DnaA complex that is not apt for DNA replication. Binds acidic phospholipids. The polypeptide is Chromosomal replication initiator protein DnaA (Photobacterium profundum (strain SS9)).